The primary structure comprises 308 residues: Small ribosomal subunit protein uS5c (308 aa).

A chloroplast-targeting transit peptide spans 1–55 (MATTATTTPSATSLTTLHRRIPLFPTTTTLLSLSSSSKPLFLSLSSTRSFPTHLY). An S5 DRBM domain is found at 152 to 215 (FEENVVQVRR…VDARRNIITV (64 aa)).

In terms of assembly, component of the chloroplast small ribosomal subunit (SSU). Mature 70S chloroplast ribosomes of higher plants consist of a small (30S) and a large (50S) subunit. The 30S small subunit contains 1 molecule of ribosomal RNA (16S rRNA) and 24 different proteins. The 50S large subunit contains 3 rRNA molecules (23S, 5S and 4.5S rRNA) and 33 different proteins. uS5c binds directly to 16S ribosomal RNA.

The protein localises to the plastid. The protein resides in the chloroplast. Functionally, component of the chloroplast ribosome (chloro-ribosome), a dedicated translation machinery responsible for the synthesis of chloroplast genome-encoded proteins, including proteins of the transcription and translation machinery and components of the photosynthetic apparatus. The polypeptide is Small ribosomal subunit protein uS5c (rps5) (Spinacia oleracea (Spinach)).